The primary structure comprises 602 residues: Aspartate--tRNA(Asp/Asn) ligase (602 aa).

An L-aspartate-binding site is contributed by Glu175. The tract at residues 199-202 (QIFK) is aspartate. An L-aspartate-binding site is contributed by Arg221. ATP-binding positions include 221–223 (RDE) and Gln230. His458 provides a ligand contact to L-aspartate. Position 492 (Glu492) interacts with ATP. Arg499 is a binding site for L-aspartate. Residue 544-547 (GLDR) coordinates ATP.

The protein belongs to the class-II aminoacyl-tRNA synthetase family. Type 1 subfamily. Homodimer.

It localises to the cytoplasm. The enzyme catalyses tRNA(Asx) + L-aspartate + ATP = L-aspartyl-tRNA(Asx) + AMP + diphosphate. In terms of biological role, aspartyl-tRNA synthetase with relaxed tRNA specificity since it is able to aspartylate not only its cognate tRNA(Asp) but also tRNA(Asn). Reaction proceeds in two steps: L-aspartate is first activated by ATP to form Asp-AMP and then transferred to the acceptor end of tRNA(Asp/Asn). This chain is Aspartate--tRNA(Asp/Asn) ligase, found in Cupriavidus necator (strain ATCC 17699 / DSM 428 / KCTC 22496 / NCIMB 10442 / H16 / Stanier 337) (Ralstonia eutropha).